A 134-amino-acid chain; its full sequence is Complexin-1 (134 aa).

Disordered regions lie at residues 1–60 (MEFV…AERE) and 74–113 (KKEEREAEAQAAMEANSEGSLTRPKKAIPPGCGDEVEEED). Residues 15 to 60 (DMGKMLGGDEEKDPDAAKKEEERQEALRQAEEERKAKYAKMEAERE) are compositionally biased toward basic and acidic residues. Residues 29–69 (DAAKKEEERQEALRQAEEERKAKYAKMEAEREAVRQGIRDK) adopt a coiled-coil conformation. Residues 48-70 (RKAKYAKMEAEREAVRQGIRDKY) form an interaction with the SNARE complex region.

It belongs to the complexin/synaphin family. In terms of assembly, binds to the SNARE core complex containing SNAP25, VAMP2 and STX1A. As to expression, nervous system. In hippocampus and cerebellum, expressed mainly by inhibitory neurons. Overexpressed in substantia nigra from patients with Parkinson disease.

Its subcellular location is the cytoplasm. It is found in the cytosol. The protein localises to the perikaryon. The protein resides in the presynapse. In terms of biological role, positively regulates a late step in exocytosis of various cytoplasmic vesicles, such as synaptic vesicles and other secretory vesicles. Organizes the SNAREs into a cross-linked zigzag topology that, when interposed between the vesicle and plasma membranes, is incompatible with fusion, thereby preventing SNAREs from releasing neurotransmitters until an action potential arrives at the synapse. Also involved in glucose-induced secretion of insulin by pancreatic beta-cells. Essential for motor behavior. The chain is Complexin-1 (CPLX1) from Homo sapiens (Human).